The following is a 503-amino-acid chain: Probable apyrase 4 (503 aa).

The segment covering methionine 1 to serine 14 has biased composition (low complexity). The tract at residues methionine 1 to proline 39 is disordered. Residues methionine 1–lysine 45 are Cytoplasmic-facing. The chain crosses the membrane as a helical; Signal-anchor for type II membrane protein span at residues serine 46 to tyrosine 66. At serine 67–isoleucine 503 the chain is on the extracellular side. Valine 83–arginine 93 contributes to the ATP binding site. Glutamate 206 (proton acceptor) is an active-site residue. Residue glycine 230 to glutamine 240 coordinates ATP. Residues asparagine 261, asparagine 293, and asparagine 338 are each glycosylated (N-linked (GlcNAc...) asparagine).

It belongs to the GDA1/CD39 NTPase family. The cofactor is Ca(2+). Expressed both in the primary root and lateral root but not in the rosette leaves.

The protein resides in the membrane. The catalysed reaction is a ribonucleoside 5'-triphosphate + 2 H2O = a ribonucleoside 5'-phosphate + 2 phosphate + 2 H(+). Its function is as follows. Catalyzes the hydrolysis of phosphoanhydride bonds of nucleoside tri- and di-phosphates. The polypeptide is Probable apyrase 4 (APY4) (Arabidopsis thaliana (Mouse-ear cress)).